Reading from the N-terminus, the 362-residue chain is Forkhead box protein F (362 aa).

Residues 19–70 (LDSTAPNNSHRTIKAENYFNEDEEDYNENSHEDSEDSKEDSDGQGCRSRKRK) are disordered. Residues 37-57 (FNEDEEDYNENSHEDSEDSKE) are compositionally biased toward acidic residues. Positions 72–169 (KPPFSYIALI…EENGFRRRPR (98 aa)) form a DNA-binding region, fork-head.

Its subcellular location is the nucleus. Its function is as follows. Transcription factor that is required for cell fate of coelomocytes which are non-muscle mesodermal cells. Acts in concert with, and by activating expression of, the homeodomain gene ceh-34. Binds to the sequence motif 5'-ATAAA[T/C]A-3'. This Caenorhabditis elegans protein is Forkhead box protein F.